The following is a 117-amino-acid chain: UPF0344 protein GWCH70_0687 (117 aa).

A run of 4 helical transmembrane segments spans residues 2-22 (THAHITSWLITVILFFIAVSL), 32-52 (IVQMALRLFYIFTVITGGLLL), 55-75 (IASISILYIIKAIVGLWLIGA), and 97-117 (IVAFVLVLFLGFMLPLGFDLF).

It belongs to the UPF0344 family.

It is found in the cell membrane. The chain is UPF0344 protein GWCH70_0687 from Geobacillus sp. (strain WCH70).